Reading from the N-terminus, the 203-residue chain is ATP-dependent Clp protease proteolytic subunit 2 (203 aa).

The Nucleophile role is filled by S100. The active site involves H125.

It belongs to the peptidase S14 family. As to quaternary structure, fourteen ClpP subunits assemble into 2 heptameric rings which stack back to back to give a disk-like structure with a central cavity, resembling the structure of eukaryotic proteasomes.

Its subcellular location is the cytoplasm. It catalyses the reaction Hydrolysis of proteins to small peptides in the presence of ATP and magnesium. alpha-casein is the usual test substrate. In the absence of ATP, only oligopeptides shorter than five residues are hydrolyzed (such as succinyl-Leu-Tyr-|-NHMec, and Leu-Tyr-Leu-|-Tyr-Trp, in which cleavage of the -Tyr-|-Leu- and -Tyr-|-Trp bonds also occurs).. In terms of biological role, cleaves peptides in various proteins in a process that requires ATP hydrolysis. Has a chymotrypsin-like activity. Plays a major role in the degradation of misfolded proteins. This is ATP-dependent Clp protease proteolytic subunit 2 from Nocardia farcinica (strain IFM 10152).